Reading from the N-terminus, the 296-residue chain is Ribonuclease HIII (296 aa).

Residues 80-296 (LALIGSDEVG…NTKKAYQRLK (217 aa)) enclose the RNase H type-2 domain. Asp-86, Glu-87, and Asp-191 together coordinate a divalent metal cation.

Belongs to the RNase HII family. RnhC subfamily. Mn(2+) is required as a cofactor. Mg(2+) serves as cofactor.

The protein localises to the cytoplasm. The enzyme catalyses Endonucleolytic cleavage to 5'-phosphomonoester.. Functionally, endonuclease that specifically degrades the RNA of RNA-DNA hybrids. The polypeptide is Ribonuclease HIII (Streptococcus thermophilus (strain ATCC BAA-250 / LMG 18311)).